Consider the following 213-residue polypeptide: Small ribosomal subunit protein uS3 (213 aa).

One can recognise a KH type-2 domain in the interval 38–106 (IRKYVKEKIF…EFALEVSEIR (69 aa)).

The protein belongs to the universal ribosomal protein uS3 family. In terms of assembly, part of the 30S ribosomal subunit. Forms a tight complex with proteins S10 and S14.

Binds the lower part of the 30S subunit head. Binds mRNA in the 70S ribosome, positioning it for translation. This chain is Small ribosomal subunit protein uS3, found in Maridesulfovibrio salexigens (strain ATCC 14822 / DSM 2638 / NCIMB 8403 / VKM B-1763) (Desulfovibrio salexigens).